Here is a 1372-residue protein sequence, read N- to C-terminus: DNA-directed RNA polymerase subunit beta (1372 aa).

The protein belongs to the RNA polymerase beta chain family. In terms of assembly, the RNAP catalytic core consists of 2 alpha, 1 beta, 1 beta' and 1 omega subunit. When a sigma factor is associated with the core the holoenzyme is formed, which can initiate transcription.

The catalysed reaction is RNA(n) + a ribonucleoside 5'-triphosphate = RNA(n+1) + diphosphate. DNA-dependent RNA polymerase catalyzes the transcription of DNA into RNA using the four ribonucleoside triphosphates as substrates. This Rickettsia bellii (strain RML369-C) protein is DNA-directed RNA polymerase subunit beta.